A 157-amino-acid polypeptide reads, in one-letter code: Phosphomannomutase (157 aa).

The active-site Phosphoserine intermediate is the serine 98. Serine 98 contributes to the Mg(2+) binding site.

This sequence belongs to the phosphohexose mutase family. The cofactor is Mg(2+).

The enzyme catalyses alpha-D-mannose 1-phosphate = D-mannose 6-phosphate. Its pathway is nucleotide-sugar biosynthesis; GDP-alpha-D-mannose biosynthesis; alpha-D-mannose 1-phosphate from D-fructose 6-phosphate: step 2/2. It participates in capsule biogenesis; capsule polysaccharide biosynthesis. Functionally, involved in the biosynthesis of the K2 capsular polysaccharide biosynthesis. This is Phosphomannomutase (manB) from Klebsiella pneumoniae.